The chain runs to 424 residues: Phosphomethylpyrimidine synthase (424 aa).

Substrate is bound by residues Asn66, Met95, Tyr124, His163, 185–187 (SRG), 226–229 (DGMR), and Glu265. A Zn(2+)-binding site is contributed by His269. Phe292 contributes to the substrate binding site. His333 contacts Zn(2+). [4Fe-4S] cluster is bound by residues Cys408, Cys411, and Cys415.

It belongs to the ThiC family. It depends on [4Fe-4S] cluster as a cofactor.

The catalysed reaction is 5-amino-1-(5-phospho-beta-D-ribosyl)imidazole + S-adenosyl-L-methionine = 4-amino-2-methyl-5-(phosphooxymethyl)pyrimidine + CO + 5'-deoxyadenosine + formate + L-methionine + 3 H(+). It functions in the pathway cofactor biosynthesis; thiamine diphosphate biosynthesis. Functionally, catalyzes the synthesis of the hydroxymethylpyrimidine phosphate (HMP-P) moiety of thiamine from aminoimidazole ribotide (AIR) in a radical S-adenosyl-L-methionine (SAM)-dependent reaction. This chain is Phosphomethylpyrimidine synthase, found in Thermotoga sp. (strain RQ2).